A 610-amino-acid polypeptide reads, in one-letter code: E3 ubiquitin-protein ligase hrd-1 (610 aa).

An N-terminal signal peptide occupies residues 1-23 (MRVSAGLMIGGSCVATAATILNA). Residues 24–41 (FLINKQFYPSIVYLSKSN) are Lumenal-facing. Residues 42 to 62 (ASMAVIYVQGIVLVYLMFQLL) traverse the membrane as a helical segment. Topologically, residues 63 to 99 (KSILFGDLRAAEAEHLSERTWHAVLETCLAFTVFRDD) are cytoplasmic. Residues 100–120 (FSAIFVMQFIGLLFIKCFHWL) traverse the membrane as a helical segment. Residues 121 to 144 (ADDRVDMMERSPVITLRFHLRMMT) are Lumenal-facing. Residues 145–165 (VLAALGFADSYFVSSAYFTTI) form a helical membrane-spanning segment. The Cytoplasmic segment spans residues 166 to 170 (TRGAS). Residues 171–191 (AQIVFGFEYAILLALVLHVTI) traverse the membrane as a helical segment. Residues 192 to 215 (KYLLHMHDLRNPQSWDNKAVYLLY) are Lumenal-facing. Residues 216 to 236 (AELFINLIRCLLYGFFAVVML) form a helical membrane-spanning segment. The Cytoplasmic segment spans residues 237–610 (RVHTFPLFSV…ARLLGENANQ (374 aa)). An RING-type; atypical zinc finger spans residues 292-333 (CIICREEMTVDASPKRLPCSHVFHAHCLRSWFQRQQTCPTCR). Disordered regions lie at residues 386–408 (QPAG…GPFP), 452–480 (VNTT…LRRM), and 521–610 (RPVV…NANQ). Residues 452–474 (VNTTQGTSSETPPVNPSYSQLST) show a composition bias toward polar residues. Positions 560–589 (TESPSTSSTAPSTSSPVTASSTPTTSSTRT) are enriched in low complexity.

Belongs to the HRD1 family. Homodimer.

Its subcellular location is the endoplasmic reticulum membrane. It carries out the reaction S-ubiquitinyl-[E2 ubiquitin-conjugating enzyme]-L-cysteine + [acceptor protein]-L-lysine = [E2 ubiquitin-conjugating enzyme]-L-cysteine + N(6)-ubiquitinyl-[acceptor protein]-L-lysine.. It functions in the pathway protein modification; protein ubiquitination. In terms of biological role, acts as an E3 ubiquitin-protein ligase which accepts ubiquitin specifically from endoplasmic reticulum-associated ubc-7 E2 ligase and transfers it to substrates, promoting their degradation. Component of the endoplasmic reticulum quality control (ERQC) system, which is also called the ER-associated degradation (ERAD) system, involved in ubiquitin-dependent degradation of misfolded endoplasmic reticulum proteins. Also promotes the degradation of normal but naturally short-lived proteins. Protects cells from ER stress-induced apoptosis. Thought to play a role together with hsp-3 in developmental growth and function of intestinal cells and to play a role together with hsp-4 in gonad formation. Plays a key role in the degradation of the potassium channel slo-1, perhaps acting directly, in targeting slo-1 to the ER-associated degradation pathway (ERAD), and also indirectly, via activation of the transcription factor skn-1, which mediates proteasomal homeostasis. This Caenorhabditis elegans protein is E3 ubiquitin-protein ligase hrd-1 (sel-11).